The primary structure comprises 680 residues: Lipase 1 (680 aa).

An N-terminal signal peptide occupies residues 1–34 (MKSQNKYSIRKFSVGASSILIATLLFLSGGQAQA). A propeptide spanning residues 35–290 (AEKQVNMGNS…AKAKGDQTNK (256 aa)) is cleaved from the precursor. Disordered regions lie at residues 39 to 58 (VNMG…GDQQ) and 82 to 260 (KNLH…KNGL). A compositionally biased stretch (polar residues) spans 40–58 (NMGNSQEDTVTAQSIGDQQ). Residues 84–112 (LHNDKTISEENHRKTDDLNKDQLKDDKKS) show a composition bias toward basic and acidic residues. 2 stretches are compositionally biased toward polar residues: residues 162-193 (SQDL…SQRE) and 204-223 (QPQQ…FNNE). Basic and acidic residues predominate over residues 224 to 234 (QEVKPQKDEKT). Over residues 235–246 (LSVSDLKNNQKS) the composition is skewed to polar residues. Serine 408 serves as the catalytic Nucleophile. Catalysis depends on aspartate 600, which acts as the Charge relay system. Aspartate 638 is a binding site for Ca(2+). Histidine 639 serves as the catalytic Charge relay system. The Ca(2+) site is built by aspartate 641, aspartate 646, and aspartate 649.

It belongs to the AB hydrolase superfamily. Lipase family.

The protein localises to the secreted. The enzyme catalyses a triacylglycerol + H2O = a diacylglycerol + a fatty acid + H(+). The polypeptide is Lipase 1 (lip1) (Staphylococcus aureus (strain MRSA252)).